Reading from the N-terminus, the 397-residue chain is Elongation factor Tu (397 aa).

The region spanning 10-207 (KPHVNIGTIG…ACDSYIPEPE (198 aa)) is the tr-type G domain. Residues 19–26 (GHIDHGKT) form a G1 region. 19–26 (GHIDHGKT) lines the GTP pocket. Threonine 26 is a Mg(2+) binding site. The G2 stretch occupies residues 60-64 (GITIA). A G3 region spans residues 81–84 (DCPG). GTP is bound by residues 81-85 (DCPGH) and 136-139 (NKCD). The segment at 136 to 139 (NKCD) is G4. The segment at 174–176 (SAL) is G5.

The protein belongs to the TRAFAC class translation factor GTPase superfamily. Classic translation factor GTPase family. EF-Tu/EF-1A subfamily. As to quaternary structure, monomer.

It is found in the cytoplasm. It catalyses the reaction GTP + H2O = GDP + phosphate + H(+). GTP hydrolase that promotes the GTP-dependent binding of aminoacyl-tRNA to the A-site of ribosomes during protein biosynthesis. The sequence is that of Elongation factor Tu from Oleidesulfovibrio alaskensis (strain ATCC BAA-1058 / DSM 17464 / G20) (Desulfovibrio alaskensis).